Reading from the N-terminus, the 306-residue chain is Acetyl-coenzyme A carboxylase carboxyl transferase subunit beta (306 aa).

In terms of domain architecture, CoA carboxyltransferase N-terminal spans 25 to 294; that stretch reads VWTKCDSCGQ…PSPDAPREAV (270 aa). Positions 29, 32, 48, and 51 each coordinate Zn(2+). The C4-type zinc-finger motif lies at 29–51; the sequence is CDSCGQVLYRAELERNLEVCPKC. Positions 286 to 306 are disordered; sequence SPDAPREAVVVPPVPDQDHEA.

This sequence belongs to the AccD/PCCB family. Acetyl-CoA carboxylase is a heterohexamer composed of biotin carboxyl carrier protein (AccB), biotin carboxylase (AccC) and two subunits each of ACCase subunit alpha (AccA) and ACCase subunit beta (AccD). Zn(2+) is required as a cofactor.

The protein resides in the cytoplasm. The catalysed reaction is N(6)-carboxybiotinyl-L-lysyl-[protein] + acetyl-CoA = N(6)-biotinyl-L-lysyl-[protein] + malonyl-CoA. The protein operates within lipid metabolism; malonyl-CoA biosynthesis; malonyl-CoA from acetyl-CoA: step 1/1. Functionally, component of the acetyl coenzyme A carboxylase (ACC) complex. Biotin carboxylase (BC) catalyzes the carboxylation of biotin on its carrier protein (BCCP) and then the CO(2) group is transferred by the transcarboxylase to acetyl-CoA to form malonyl-CoA. The protein is Acetyl-coenzyme A carboxylase carboxyl transferase subunit beta of Cronobacter sakazakii (strain ATCC BAA-894) (Enterobacter sakazakii).